A 67-amino-acid chain; its full sequence is Large ribosomal subunit protein bL28 (67 aa).

Belongs to the bacterial ribosomal protein bL28 family.

In Nitratiruptor sp. (strain SB155-2), this protein is Large ribosomal subunit protein bL28.